The primary structure comprises 133 residues: Large ribosomal subunit protein eL32y (133 aa).

Belongs to the eukaryotic ribosomal protein eL32 family.

The protein is Large ribosomal subunit protein eL32y (RPL32B) of Arabidopsis thaliana (Mouse-ear cress).